The chain runs to 434 residues: Glutamine synthetase leaf isozyme, chloroplastic (434 aa).

2 disordered regions span residues 1 to 33 and 101 to 126; these read MQVR…ARQP and TISK…GQAP. Residues 1–54 constitute a chloroplast transit peptide; that stretch reads MQVRRDDDGAGGCAGDAVPGGGEGQDGVPARQPAGRVWGVSRAARATSGFKVLA. Gly residues predominate over residues 10–25; it reads AGGCAGDAVPGGGEGQ. A GS beta-grasp domain is found at 81–161; sequence IIAEYIWVGG…VICDTYTPQG (81 aa). The 267-residue stretch at 168–434 folds into the GS catalytic domain; the sequence is KRHMAAQIFS…LAAKKLALKV (267 aa).

It belongs to the glutamine synthetase family. As to quaternary structure, homooctamer.

The protein resides in the plastid. The protein localises to the chloroplast. The catalysed reaction is L-glutamate + NH4(+) + ATP = L-glutamine + ADP + phosphate + H(+). The light-modulated chloroplast enzyme, encoded by a nuclear gene and expressed primarily in leaves, is responsible for the reassimilation of the ammonia generated by photorespiration. This is Glutamine synthetase leaf isozyme, chloroplastic from Hordeum vulgare (Barley).